Reading from the N-terminus, the 330-residue chain is ADP-L-glycero-D-manno-heptose-6-epimerase (330 aa).

Residues 11-12, 32-33, glutamine 39, glutamine 54, 75-79, and asparagine 92 each bind NADP(+); these read FI, DD, and QGACA. Tyrosine 139 (proton acceptor) is an active-site residue. An NADP(+)-binding site is contributed by lysine 143. Residue asparagine 168 participates in substrate binding. 2 residues coordinate NADP(+): valine 169 and lysine 177. The Proton acceptor role is filled by lysine 177. Substrate is bound by residues arginine 179, histidine 186, 200–203, arginine 213, and tyrosine 292; that span reads FGEH.

This sequence belongs to the NAD(P)-dependent epimerase/dehydratase family. HldD subfamily. Homopentamer. Requires NADP(+) as cofactor.

It carries out the reaction ADP-D-glycero-beta-D-manno-heptose = ADP-L-glycero-beta-D-manno-heptose. It functions in the pathway nucleotide-sugar biosynthesis; ADP-L-glycero-beta-D-manno-heptose biosynthesis; ADP-L-glycero-beta-D-manno-heptose from D-glycero-beta-D-manno-heptose 7-phosphate: step 4/4. It participates in bacterial outer membrane biogenesis; LPS core biosynthesis. Its function is as follows. Catalyzes the interconversion between ADP-D-glycero-beta-D-manno-heptose and ADP-L-glycero-beta-D-manno-heptose via an epimerization at carbon 6 of the heptose. In Pseudomonas aeruginosa (strain ATCC 15692 / DSM 22644 / CIP 104116 / JCM 14847 / LMG 12228 / 1C / PRS 101 / PAO1), this protein is ADP-L-glycero-D-manno-heptose-6-epimerase.